Here is a 676-residue protein sequence, read N- to C-terminus: MSGPLASGTCSDPEEVSDLKSPLSSRFREPLTHARFQELFGGAEPEPELPAEPCLPCLCRLRRRRASACSGPGAWRVLLARLPPLRWLPQYRWRAWLLGDAVAGVTVGVVHVPQGMAFALLTSVPPVFGLYTSFFPVLIYSLLGTGRHLSTGTFAVLSLMTGSVVERVVPEPLAGNLSGIEREQLEARRVGAAAAVAFGSGALMLGMFVLQLGVLSTFLSEPVIKALTSGAALHVLVSQLPSLLGLSLPRQIGCFSLFKTLAAVLSALSQSSPAEVTISALSLVLLVPVKELNVRFRDRLLTPIPGEVVMVLLATVLCFTSSLDTRYNVQVVGPLPGGFPQPLLPTLDELPRILADSLPISLVTFAVSTSLASIYADKYSYTIEPNQELLAHGVSNLISSLFSCFPNSATLATTSLLVDAGGNTQLAGLFSCAVVLAALLWLRPFFYYLPKAVLACINISSMRQMFFQMQELPQLWHISHVDFAVWIVTWVAVVTLNVDLGLAVGVVVSMMTVVCRTQRVQCLELGLAEGTELYRPIRESRKLLQVPGLCILSYPAPLYFATRGQFHRILEWHLGLGERIKPGAEPVRVAILDFSGITFVDAAGAREVVQLTRRCQDDGIYLLLAQCNALVLETLTRARLLDSVSPEQLFVSVQDAAAHALERLKPTGPKICTVWV.

The disordered stretch occupies residues 1–24 (MSGPLASGTCSDPEEVSDLKSPLS). The next 11 membrane-spanning stretches (helical) occupy residues 101 to 121 (AVAGVTVGVVHVPQGMAFALL), 124 to 144 (VPPVFGLYTSFFPVLIYSLLG), 149 to 165 (LSTGTFAVLSLMTGSVV), 190 to 210 (VGAAAAVAFGSGALMLGMFVL), 226 to 246 (ALTSGAALHVLVSQLPSLLGL), 267 to 287 (ALSQSSPAEVTISALSLVLLV), 300 to 320 (LLTPIPGEVVMVLLATVLCFT), 353 to 373 (ILADSLPISLVTFAVSTSLAS), 398 to 418 (ISSLFSCFPNSATLATTSLLV), 426 to 446 (LAGLFSCAVVLAALLWLRPFF), and 487 to 507 (IVTWVAVVTLNVDLGLAVGVV). Residues 539 to 660 (ESRKLLQVPG…VSVQDAAAHA (122 aa)) form the STAS domain.

Belongs to the SLC26A/SulP transporter (TC 2.A.53) family.

The protein resides in the membrane. Its function is as follows. Chloride/bicarbonate exchanger. This chain is Solute carrier family 26 member 10 (Slc26a10), found in Mus musculus (Mouse).